Consider the following 227-residue polypeptide: GRF-interacting factor 1 (227 aa).

Over residues 124–139 (ALSPLQQQQQQQAAAA) the composition is skewed to low complexity. 2 disordered regions span residues 124 to 160 (ALSP…LHGE) and 188 to 227 (GGGG…EEGS). The segment covering 217–227 (EYLKGTEEEGS) has biased composition (basic and acidic residues).

The protein belongs to the SS18 family. Interacts with GRF4. Highly expressed in internodes, nodes, developing spikelets and developing anthers. Expressed at low levels in roots and mature glumes.

Its subcellular location is the nucleus. It is found in the cytoplasm. Transcription coactivator that plays a role in the regulation of meristematic function in leaves, stems and inflorescences. May regulate leaf size, length of stem internodes, and seed size by promoting cell expansion. Transcription coactivator that plays a role in the regulation of grain size. Component of a network formed by the microRNA396 (miRNA396), the GRFs and their interacting factors (GIFs) acting in the regulation of meristem function, at least partially through the control of cell proliferation. Component of the miRNA396c-GRF4-GIF1 regulatory module that plays an important role in grain size determination. The polypeptide is GRF-interacting factor 1 (Oryza sativa subsp. japonica (Rice)).